Consider the following 1325-residue polypeptide: Nonribosomal peptide synthetase (1325 aa).

The adenylation stretch occupies residues 248–644; it reads YQQLDRLSTR…LGEIEYQIQQ (397 aa). The Carrier domain maps to 779 to 856; sequence EIVNPGEITL…DQARLLRPLS (78 aa). S816 is subject to O-(pantetheine 4'-phosphoryl)serine. Positions 893–1310 are condensation; sequence EDVYPCTPLQ…DDYSTTLHTL (418 aa).

Belongs to the NRP synthetase family. It depends on pantetheine 4'-phosphate as a cofactor.

Its pathway is antifungal biosynthesis. Functionally, nonribosomal peptide synthetase; part of the gene cluster that mediates the biosynthesis of the tetrahydropyranyl antifungal agent lanomycin that acts as an inhibitor of CYP51 and blocks the ergosterol biosynthesis. The biosynthesis probably begins with the formation of an hexaketide, followed by methionine mediated alkylation of C-2 and C-6, and methylation of the reduced C-3 oxygen, pyran forming reductive ring closure, oxygenation of C-4, beta-keto reduction, enoyl reduction and dehydration of the remaining oxygens, and finally, acylation with glycine to complete the biosynthesis. The sequence is that of Nonribosomal peptide synthetase from Pyrenophora dematioidea (Helminthosporium dematioideum).